The primary structure comprises 273 residues: Pyridoxal phosphate homeostasis protein (273 aa).

Phosphoserine is present on S6. N6-(pyridoxal phosphate)lysine is present on K47. Y69 is subject to Phosphotyrosine. K125 is subject to N6-succinyllysine. S226 and S244 each carry phosphoserine. Residues 251-260 (DYSKKTDKPA) are compositionally biased toward basic and acidic residues. The interval 251–273 (DYSKKTDKPAAELQAPEEVAQAH) is disordered.

It belongs to the pyridoxal phosphate-binding protein YggS/PROSC family.

Pyridoxal 5'-phosphate (PLP)-binding protein, which may be involved in intracellular homeostatic regulation of pyridoxal 5'-phosphate (PLP), the active form of vitamin B6. This chain is Pyridoxal phosphate homeostasis protein, found in Bos taurus (Bovine).